We begin with the raw amino-acid sequence, 125 residues long: Small ribosomal subunit protein uS12 (125 aa).

Asp89 carries the post-translational modification 3-methylthioaspartic acid.

The protein belongs to the universal ribosomal protein uS12 family. As to quaternary structure, part of the 30S ribosomal subunit. Contacts proteins S8 and S17. May interact with IF1 in the 30S initiation complex.

Its function is as follows. With S4 and S5 plays an important role in translational accuracy. In terms of biological role, interacts with and stabilizes bases of the 16S rRNA that are involved in tRNA selection in the A site and with the mRNA backbone. Located at the interface of the 30S and 50S subunits, it traverses the body of the 30S subunit contacting proteins on the other side and probably holding the rRNA structure together. The combined cluster of proteins S8, S12 and S17 appears to hold together the shoulder and platform of the 30S subunit. This Cupriavidus metallidurans (strain ATCC 43123 / DSM 2839 / NBRC 102507 / CH34) (Ralstonia metallidurans) protein is Small ribosomal subunit protein uS12.